The chain runs to 154 residues: Ribosome maturation factor RimP (154 aa).

This sequence belongs to the RimP family.

Its subcellular location is the cytoplasm. Functionally, required for maturation of 30S ribosomal subunits. The sequence is that of Ribosome maturation factor RimP from Alkaliphilus oremlandii (strain OhILAs) (Clostridium oremlandii (strain OhILAs)).